The following is a 163-amino-acid chain: NADPH-dependent 7-cyano-7-deazaguanine reductase (163 aa).

The span at 1-10 (MSKPPRRSPR) shows a compositional bias: basic residues. The interval 1 to 23 (MSKPPRRSPRKPTPASPELQLGH) is disordered. Residue cysteine 61 is the Thioimide intermediate of the active site. The active-site Proton donor is aspartate 68. Residues 83–85 (LES) and 102–103 (HE) each bind substrate.

This sequence belongs to the GTP cyclohydrolase I family. QueF type 1 subfamily.

It localises to the cytoplasm. It carries out the reaction 7-aminomethyl-7-carbaguanine + 2 NADP(+) = 7-cyano-7-deazaguanine + 2 NADPH + 3 H(+). Its pathway is tRNA modification; tRNA-queuosine biosynthesis. Catalyzes the NADPH-dependent reduction of 7-cyano-7-deazaguanine (preQ0) to 7-aminomethyl-7-deazaguanine (preQ1). The chain is NADPH-dependent 7-cyano-7-deazaguanine reductase from Rhodopseudomonas palustris (strain BisA53).